The following is a 434-amino-acid chain: F-box/LRR-repeat protein 21 (434 aa).

Residues L39–F85 form the F-box domain. LRR repeat units follow at residues D187 to S213, C214 to Y239, L242 to V265, G322 to A347, G349 to E374, and C375 to E400.

Part of the SCF (SKP1-CUL1-F-box) E3 ubiquitin-protein ligase complex SCF(FBXL21) composed of CUL1, SKP1, RBX1 and FBXL21. Interacts with CRY1 and CRY2.

The protein localises to the cytoplasm. It localises to the cytosol. The protein resides in the nucleus. The protein operates within protein modification; protein ubiquitination. Its function is as follows. Substrate-recognition component of the SCF(FBXL21) E3 ubiquitin ligase complex involved in circadian rhythm function. Plays a key role in the maintenance of both the speed and the robustness of the circadian clock oscillation. The SCF(FBXL21) complex mainly acts in the cytosol and mediates ubiquitination of CRY proteins (CRY1 and CRY2), leading to CRY proteins stabilization. The SCF(FBXL21) complex counteracts the activity of the SCF(FBXL3) complex and protects CRY proteins from degradation. Involved in the hypothalamic suprachiasmatic nucleus (SCN) clock regulating temporal organization of the daily activities. In Bos taurus (Bovine), this protein is F-box/LRR-repeat protein 21 (FBXL21).